The sequence spans 78 residues: Exodeoxyribonuclease 7 small subunit (78 aa).

Belongs to the XseB family. In terms of assembly, heterooligomer composed of large and small subunits.

It is found in the cytoplasm. It catalyses the reaction Exonucleolytic cleavage in either 5'- to 3'- or 3'- to 5'-direction to yield nucleoside 5'-phosphates.. In terms of biological role, bidirectionally degrades single-stranded DNA into large acid-insoluble oligonucleotides, which are then degraded further into small acid-soluble oligonucleotides. The chain is Exodeoxyribonuclease 7 small subunit from Paracoccus zeaxanthinifaciens.